Consider the following 285-residue polypeptide: Probable endonuclease 4 (285 aa).

The Zn(2+) site is built by H69, H109, E145, D179, H182, H216, D229, H231, and E261.

Belongs to the AP endonuclease 2 family. Zn(2+) serves as cofactor.

It carries out the reaction Endonucleolytic cleavage to 5'-phosphooligonucleotide end-products.. In terms of biological role, endonuclease IV plays a role in DNA repair. It cleaves phosphodiester bonds at apurinic or apyrimidinic (AP) sites, generating a 3'-hydroxyl group and a 5'-terminal sugar phosphate. The sequence is that of Probable endonuclease 4 from Salmonella typhimurium (strain LT2 / SGSC1412 / ATCC 700720).